We begin with the raw amino-acid sequence, 122 residues long: Large ribosomal subunit protein uL18 (122 aa).

Belongs to the universal ribosomal protein uL18 family. In terms of assembly, part of the 50S ribosomal subunit; part of the 5S rRNA/L5/L18/L25 subcomplex. Contacts the 5S and 23S rRNAs.

Its function is as follows. This is one of the proteins that bind and probably mediate the attachment of the 5S RNA into the large ribosomal subunit, where it forms part of the central protuberance. In Lachnospira eligens (strain ATCC 27750 / DSM 3376 / VPI C15-48 / C15-B4) (Eubacterium eligens), this protein is Large ribosomal subunit protein uL18.